A 142-amino-acid chain; its full sequence is MAKKIAGQLKLQVPAGSATPSPPIGPALGQRGINIMEFCKAFNAQSQDLEKGSPIPVVITYYQDKSFTFTMKTPPVSYFLKKAANLKSGSKEPGKQSAGQISRAKVREIAETKMKDLNANDVEAAMRMVEGSARSMGLEVVG.

The tract at residues 86 to 105 is disordered; the sequence is LKSGSKEPGKQSAGQISRAK.

This sequence belongs to the universal ribosomal protein uL11 family. Part of the ribosomal stalk of the 50S ribosomal subunit. Interacts with L10 and the large rRNA to form the base of the stalk. L10 forms an elongated spine to which L12 dimers bind in a sequential fashion forming a multimeric L10(L12)X complex. One or more lysine residues are methylated.

Functionally, forms part of the ribosomal stalk which helps the ribosome interact with GTP-bound translation factors. The protein is Large ribosomal subunit protein uL11 of Chelativorans sp. (strain BNC1).